Reading from the N-terminus, the 276-residue chain is Large ribosomal subunit protein uL2 (276 aa).

A disordered region spans residues W213–T264.

Belongs to the universal ribosomal protein uL2 family. Part of the 50S ribosomal subunit. Forms a bridge to the 30S subunit in the 70S ribosome.

Functionally, one of the primary rRNA binding proteins. Required for association of the 30S and 50S subunits to form the 70S ribosome, for tRNA binding and peptide bond formation. It has been suggested to have peptidyltransferase activity; this is somewhat controversial. Makes several contacts with the 16S rRNA in the 70S ribosome. The polypeptide is Large ribosomal subunit protein uL2 (Granulibacter bethesdensis (strain ATCC BAA-1260 / CGDNIH1)).